The following is an 83-amino-acid chain: Consomatin Rs1 (83 aa).

Residues 1–22 (MQTAYWVMVMMMVWITAPLSEG) form the signal peptide. Residues 23-55 (GKLNNVIRGLVPDDVTPKRISQSLISRRRFDSR) constitute a propeptide that is removed on maturation. Cysteines 62 and 67 form a disulfide. Residue W64 is modified to D-tryptophan. P68 carries the post-translational modification 4-hydroxyproline. The propeptide occupies 71 to 83 (LHGDNYDLKEKDK).

The protein belongs to the conotoxin C superfamily. Consomatin family. Expressed by the venom duct.

The protein localises to the secreted. Its function is as follows. Moderately activates human somatostatin receptors (SSTR) with a preferential activation of SSTR1 and SSTR4. In vivo, does not cause behavioral changes in mice within a few minutes of intracranial injection, but causes a progressive loss of movement thereafter. Four to five hours after injection, mice recover, even with the highest dose tested. Shows antinociception and antihyperalgesia activities in two mouse models of acute pain, most probably by acting outside the central nervous system. This Conus raulsilvai (Sea snail) protein is Consomatin Rs1.